The following is a 198-amino-acid chain: Carnitine operon protein CaiE (198 aa).

The tract at residues 174 to 198 (KPLTQAEENRPRLKGTTDVKPKSAQ) is disordered. Residues 180–198 (EENRPRLKGTTDVKPKSAQ) show a composition bias toward basic and acidic residues.

Belongs to the transferase hexapeptide repeat family.

It functions in the pathway amine and polyamine metabolism; carnitine metabolism. In terms of biological role, overproduction of CaiE stimulates the activity of CaiB and CaiD. This is Carnitine operon protein CaiE from Salmonella dublin (strain CT_02021853).